The sequence spans 282 residues: V-set domain-containing T-cell activation inhibitor 1 (282 aa).

The first 24 residues, 1-24 (MASLGQIIFWSIINVIIILAGAIV), serve as a signal peptide directing secretion. Ig-like V-type domains follow at residues 35 to 144 (HFIT…ANLE) and 153 to 241 (PEIN…IKVT). 2 cysteine pairs are disulfide-bonded: cysteine 56–cysteine 130 and cysteine 168–cysteine 225. A glycan (N-linked (GlcNAc...) asparagine) is linked at asparagine 216. Glycine 257 carries GPI-anchor amidated glycine lipidation. A propeptide spans 258-282 (PSPCVSSVSAAGWALLSLSCCLMLR) (removed in mature form).

Belongs to the immunoglobulin superfamily. BTN/MOG family. In terms of processing, N-glycosylated.

Its subcellular location is the cell membrane. In terms of biological role, negatively regulates T-cell-mediated immune response by inhibiting T-cell activation, proliferation, cytokine production and development of cytotoxicity. When expressed on the cell surface of tumor macrophages, plays an important role, together with regulatory T-cells (Treg), in the suppression of tumor-associated antigen-specific T-cell immunity. Involved in promoting epithelial cell transformation. The polypeptide is V-set domain-containing T-cell activation inhibitor 1 (Rattus norvegicus (Rat)).